Reading from the N-terminus, the 196-residue chain is ATP-dependent Clp protease proteolytic subunit 1 (196 aa).

The active-site Nucleophile is the serine 96. The active site involves histidine 121.

It belongs to the peptidase S14 family. Fourteen ClpP subunits assemble into 2 heptameric rings which stack back to back to give a disk-like structure with a central cavity, resembling the structure of eukaryotic proteasomes.

It localises to the cytoplasm. The enzyme catalyses Hydrolysis of proteins to small peptides in the presence of ATP and magnesium. alpha-casein is the usual test substrate. In the absence of ATP, only oligopeptides shorter than five residues are hydrolyzed (such as succinyl-Leu-Tyr-|-NHMec, and Leu-Tyr-Leu-|-Tyr-Trp, in which cleavage of the -Tyr-|-Leu- and -Tyr-|-Trp bonds also occurs).. Its function is as follows. Cleaves peptides in various proteins in a process that requires ATP hydrolysis. Has a chymotrypsin-like activity. Plays a major role in the degradation of misfolded proteins. This is ATP-dependent Clp protease proteolytic subunit 1 from Prochlorococcus marinus (strain NATL2A).